Consider the following 623-residue polypeptide: V-type proton ATPase catalytic subunit A (623 aa).

Residue 252–259 (GAFGCGKT) coordinates ATP.

Belongs to the ATPase alpha/beta chains family. As to quaternary structure, V-ATPase is a heteromultimeric enzyme composed of a peripheral catalytic V1 complex (main components: subunits A, B, C, D, E, and F) attached to an integral membrane V0 proton pore complex (main component: the proteolipid protein).

It catalyses the reaction ATP + H2O + 4 H(+)(in) = ADP + phosphate + 5 H(+)(out). Its function is as follows. Catalytic subunit of the peripheral V1 complex of vacuolar ATPase. V-ATPase vacuolar ATPase is responsible for acidifying a variety of intracellular compartments in eukaryotic cells. In Citrus unshiu (Satsuma mandarin), this protein is V-type proton ATPase catalytic subunit A.